We begin with the raw amino-acid sequence, 377 residues long: Protein RecA (377 aa).

ATP is bound at residue 82–89; the sequence is GPESSGKT. Positions 345 to 377 are disordered; that stretch reads EGSEVSANSMRPLASAARQASSRPNLSQVSANG. The span at 362–377 shows a compositional bias: polar residues; sequence RQASSRPNLSQVSANG.

This sequence belongs to the RecA family.

The protein localises to the cytoplasm. Functionally, can catalyze the hydrolysis of ATP in the presence of single-stranded DNA, the ATP-dependent uptake of single-stranded DNA by duplex DNA, and the ATP-dependent hybridization of homologous single-stranded DNAs. It interacts with LexA causing its activation and leading to its autocatalytic cleavage. The polypeptide is Protein RecA (Prochlorococcus marinus (strain NATL2A)).